Reading from the N-terminus, the 183-residue chain is UPF0725 protein At4g11700 (183 aa).

This sequence belongs to the UPF0725 (EMB2204) family.

This Arabidopsis thaliana (Mouse-ear cress) protein is UPF0725 protein At4g11700.